A 156-amino-acid chain; its full sequence is tRNA (cytidine(34)-2'-O)-methyltransferase (156 aa).

Residues Gly-102, Leu-124, and Ser-132 each coordinate S-adenosyl-L-methionine.

Belongs to the class IV-like SAM-binding methyltransferase superfamily. RNA methyltransferase TrmH family. TrmL subfamily. As to quaternary structure, homodimer.

It is found in the cytoplasm. It catalyses the reaction cytidine(34) in tRNA + S-adenosyl-L-methionine = 2'-O-methylcytidine(34) in tRNA + S-adenosyl-L-homocysteine + H(+). It carries out the reaction 5-carboxymethylaminomethyluridine(34) in tRNA(Leu) + S-adenosyl-L-methionine = 5-carboxymethylaminomethyl-2'-O-methyluridine(34) in tRNA(Leu) + S-adenosyl-L-homocysteine + H(+). In terms of biological role, methylates the ribose at the nucleotide 34 wobble position in the two leucyl isoacceptors tRNA(Leu)(CmAA) and tRNA(Leu)(cmnm5UmAA). Catalyzes the methyl transfer from S-adenosyl-L-methionine to the 2'-OH of the wobble nucleotide. This is tRNA (cytidine(34)-2'-O)-methyltransferase from Burkholderia cenocepacia (strain HI2424).